Reading from the N-terminus, the 152-residue chain is Actin-related protein 2/3 complex subunit 5-B (152 aa).

The segment at 21–44 (NKFVDDQLQEEPAEPQGPDEAEVD) is disordered. Residues 27 to 43 (QLQEEPAEPQGPDEAEV) show a composition bias toward acidic residues.

This sequence belongs to the ARPC5 family. Component of the Arp2/3 complex composed of actr2/arp2, actr3/arp3, arpc1 (arpc1a or arpc1b), arpc2, arpc3, arpc4 and arpc5.

It is found in the cytoplasm. It localises to the cytoskeleton. The protein localises to the cell projection. The protein resides in the nucleus. Its function is as follows. Component of the Arp2/3 complex, a multiprotein complex that mediates actin polymerization upon stimulation by nucleation-promoting factor (NPF). The Arp2/3 complex mediates the formation of branched actin networks in the cytoplasm, providing the force for cell motility. In addition to its role in the cytoplasmic cytoskeleton, the Arp2/3 complex also promotes actin polymerization in the nucleus, thereby regulating gene transcription and repair of damaged DNA. The Arp2/3 complex promotes homologous recombination (HR) repair in response to DNA damage by promoting nuclear actin polymerization, leading to drive motility of double-strand breaks (DSBs). The polypeptide is Actin-related protein 2/3 complex subunit 5-B (arpc5-b) (Xenopus laevis (African clawed frog)).